Here is a 134-residue protein sequence, read N- to C-terminus: uncharacterized protein (134 aa).

Positions 1-26 are cleaved as a signal peptide; it reads MRLYKAMALCLPLVVICTSEVSQSTA. Residues 77–98 are disordered; the sequence is GEKNEEVAGPVDGEGSEEEAFD.

This is an uncharacterized protein from Encephalitozoon cuniculi (strain GB-M1) (Microsporidian parasite).